A 93-amino-acid polypeptide reads, in one-letter code: Small ribosomal subunit protein bS20c (93 aa).

This sequence belongs to the bacterial ribosomal protein bS20 family.

Its subcellular location is the plastid. The protein resides in the chloroplast. In terms of biological role, binds directly to 16S ribosomal RNA. The chain is Small ribosomal subunit protein bS20c from Trieres chinensis (Marine centric diatom).